The sequence spans 355 residues: UDP-N-acetylglucosamine--N-acetylmuramyl-(pentapeptide) pyrophosphoryl-undecaprenol N-acetylglucosamine transferase (355 aa).

Residues 14-16 (TGG), Asn126, Arg162, Ser190, Ile243, 262-267 (ALTVSE), and Gln287 contribute to the UDP-N-acetyl-alpha-D-glucosamine site.

The protein belongs to the glycosyltransferase 28 family. MurG subfamily.

It is found in the cell inner membrane. It catalyses the reaction di-trans,octa-cis-undecaprenyl diphospho-N-acetyl-alpha-D-muramoyl-L-alanyl-D-glutamyl-meso-2,6-diaminopimeloyl-D-alanyl-D-alanine + UDP-N-acetyl-alpha-D-glucosamine = di-trans,octa-cis-undecaprenyl diphospho-[N-acetyl-alpha-D-glucosaminyl-(1-&gt;4)]-N-acetyl-alpha-D-muramoyl-L-alanyl-D-glutamyl-meso-2,6-diaminopimeloyl-D-alanyl-D-alanine + UDP + H(+). It functions in the pathway cell wall biogenesis; peptidoglycan biosynthesis. Cell wall formation. Catalyzes the transfer of a GlcNAc subunit on undecaprenyl-pyrophosphoryl-MurNAc-pentapeptide (lipid intermediate I) to form undecaprenyl-pyrophosphoryl-MurNAc-(pentapeptide)GlcNAc (lipid intermediate II). This chain is UDP-N-acetylglucosamine--N-acetylmuramyl-(pentapeptide) pyrophosphoryl-undecaprenol N-acetylglucosamine transferase, found in Vibrio vulnificus (strain CMCP6).